Reading from the N-terminus, the 433-residue chain is tRNA(Ile)-lysidine synthase (433 aa).

37 to 42 (SGGKDS) is an ATP binding site.

This sequence belongs to the tRNA(Ile)-lysidine synthase family.

Its subcellular location is the cytoplasm. The catalysed reaction is cytidine(34) in tRNA(Ile2) + L-lysine + ATP = lysidine(34) in tRNA(Ile2) + AMP + diphosphate + H(+). Its function is as follows. Ligates lysine onto the cytidine present at position 34 of the AUA codon-specific tRNA(Ile) that contains the anticodon CAU, in an ATP-dependent manner. Cytidine is converted to lysidine, thus changing the amino acid specificity of the tRNA from methionine to isoleucine. The protein is tRNA(Ile)-lysidine synthase of Leptospira interrogans serogroup Icterohaemorrhagiae serovar Lai (strain 56601).